Consider the following 632-residue polypeptide: Maltase 1 (632 aa).

The segment covering 1–29 (MEEGERWREGHVYQRSSETRKPTNYDRPD) has biased composition (basic and acidic residues). A disordered region spans residues 1-30 (MEEGERWREGHVYQRSSETRKPTNYDRPDS). N-linked (GlcNAc...) asparagine glycans are attached at residues Asn-179 and Asn-212. Asp-280 (nucleophile) is an active-site residue. The N-linked (GlcNAc...) asparagine glycan is linked to Asn-333. Glu-348 acts as the Proton donor in catalysis. Residues Asn-461, Asn-575, and Asn-578 are each glycosylated (N-linked (GlcNAc...) asparagine).

The protein belongs to the glycosyl hydrolase 13 family.

It carries out the reaction Hydrolysis of terminal, non-reducing (1-&gt;4)-linked alpha-D-glucose residues with release of alpha-D-glucose.. The chain is Maltase 1 (Mal-B1) from Drosophila virilis (Fruit fly).